Consider the following 675-residue polypeptide: UvrABC system protein B (675 aa).

In terms of domain architecture, Helicase ATP-binding spans 32–417 (EGLSDGLAYQ…EHAGQVVEQV (386 aa)). 45–52 (GVTGSGKT) serves as a coordination point for ATP. The short motif at 98–121 (YYDYYQPEAYVPSRDLFIEKDSAI) is the Beta-hairpin element. The region spanning 436–602 (QVDDLMSEIN…QIKKQVKDII (167 aa)) is the Helicase C-terminal domain. One can recognise a UVR domain in the interval 634–669 (IKEIAKLEKAMQQAARDLQFEEAAVLRDRISNIKEN).

Belongs to the UvrB family. Forms a heterotetramer with UvrA during the search for lesions. Interacts with UvrC in an incision complex.

It is found in the cytoplasm. Its function is as follows. The UvrABC repair system catalyzes the recognition and processing of DNA lesions. A damage recognition complex composed of 2 UvrA and 2 UvrB subunits scans DNA for abnormalities. Upon binding of the UvrA(2)B(2) complex to a putative damaged site, the DNA wraps around one UvrB monomer. DNA wrap is dependent on ATP binding by UvrB and probably causes local melting of the DNA helix, facilitating insertion of UvrB beta-hairpin between the DNA strands. Then UvrB probes one DNA strand for the presence of a lesion. If a lesion is found the UvrA subunits dissociate and the UvrB-DNA preincision complex is formed. This complex is subsequently bound by UvrC and the second UvrB is released. If no lesion is found, the DNA wraps around the other UvrB subunit that will check the other stand for damage. The polypeptide is UvrABC system protein B (Neisseria gonorrhoeae (strain ATCC 700825 / FA 1090)).